Consider the following 73-residue polypeptide: Cell division protein ZapB (73 aa).

The stretch at 3–69 (LELLSKLETK…EKVTGLVGLL (67 aa)) forms a coiled coil. Positions 30 to 50 (EKQKSSTLSEHNQQLNEQNQQ) are disordered. The segment covering 41 to 50 (NQQLNEQNQQ) has biased composition (low complexity).

It belongs to the ZapB family. As to quaternary structure, homodimer. The ends of the coiled-coil dimer bind to each other, forming polymers. Interacts with FtsZ.

Its subcellular location is the cytoplasm. Its function is as follows. Non-essential, abundant cell division factor that is required for proper Z-ring formation. It is recruited early to the divisome by direct interaction with FtsZ, stimulating Z-ring assembly and thereby promoting cell division earlier in the cell cycle. Its recruitment to the Z-ring requires functional FtsA or ZipA. The sequence is that of Cell division protein ZapB from Shewanella putrefaciens (strain CN-32 / ATCC BAA-453).